The following is a 287-amino-acid chain: Nucleotide-binding protein VV0445 (287 aa).

8–15 is an ATP binding site; it reads GHSGAGKS. A GTP-binding site is contributed by 56 to 59; sequence DVRN.

This sequence belongs to the RapZ-like family.

Its function is as follows. Displays ATPase and GTPase activities. This Vibrio vulnificus (strain YJ016) protein is Nucleotide-binding protein VV0445.